Reading from the N-terminus, the 643-residue chain is Leukocyte immunoglobulin-like receptor subfamily B member 5 (643 aa).

The signal sequence occupies residues 1-23 (MTLTLSVLICLGLNVGPRTCVQA). Topologically, residues 24–458 (GTLPKPTLWA…PQSGLGRHLG (435 aa)) are extracellular. Ig-like C2-type domains follow at residues 27 to 116 (PKPT…LELV), 111 to 228 (DPLE…SLLI), 224 to 313 (PSLL…DPLD), and 337 to 418 (GENV…LVVS). An intrachain disulfide couples C49 to C98. An N-linked (GlcNAc...) asparagine glycan is attached at N139. Disulfide bonds link C144/C195 and C244/C295. N-linked (GlcNAc...) asparagine glycosylation is found at N279 and N339. C344 and C395 form a disulfide bridge. A compositionally biased stretch (low complexity) spans 417-433 (VSGPSGDPSLSPTGSTP). Residues 417–449 (VSGPSGDPSLSPTGSTPTPGPEDQPLTPTGLDP) form a disordered region. Residues 459–479 (VVTGVSVAFVLLLFLLLFLLL) form a helical membrane-spanning segment. Topologically, residues 480–643 (RHRHQSKHRT…PSIYAPLAIH (164 aa)) are cytoplasmic. The disordered stretch occupies residues 493 to 643 (FYRPAGAAGP…PSIYAPLAIH (151 aa)). A Phosphoserine modification is found at S514. 3 stretches are compositionally biased toward basic and acidic residues: residues 531–549 (TQPK…RDED), 557–567 (EVKHSRPRREM), and 579–592 (LDTK…DRQM). The short motif at 605–610 (VTYAQL) is the ITIM motif 1 element. Residues 615-631 (LRREATEPPPSQEREPP) are compositionally biased toward basic and acidic residues. The short motif at 635 to 640 (SIYAPL) is the ITIM motif 2 element.

It localises to the membrane. Its function is as follows. May act as receptor for class I MHC antigens. The chain is Leukocyte immunoglobulin-like receptor subfamily B member 5 (LILRB5) from Pan troglodytes (Chimpanzee).